The sequence spans 380 residues: Cytochrome b (380 aa).

The next 4 helical transmembrane spans lie at 34-54, 78-99, 114-134, and 179-199; these read FGSL…FLAM, WLVR…YLHI, WNIG…GYVL, and FFAF…LHLL. The heme b site is built by His84 and His98. Positions 183 and 197 each coordinate heme b. Residue His202 coordinates a ubiquinone. A run of 4 helical transmembrane segments spans residues 227–247, 289–309, 321–341, and 348–368; these read YKDT…SMLS, LGGV…PMIH, MTQF…WIGG, and FIEI…IFMP.

It belongs to the cytochrome b family. As to quaternary structure, the cytochrome bc1 complex contains 3 respiratory subunits (MT-CYB, CYC1 and UQCRFS1), 2 core proteins (UQCRC1 and UQCRC2) and probably 6 low-molecular weight proteins. Requires heme b as cofactor.

It is found in the mitochondrion inner membrane. In terms of biological role, component of the ubiquinol-cytochrome c reductase complex (complex III or cytochrome b-c1 complex) that is part of the mitochondrial respiratory chain. The b-c1 complex mediates electron transfer from ubiquinol to cytochrome c. Contributes to the generation of a proton gradient across the mitochondrial membrane that is then used for ATP synthesis. This chain is Cytochrome b (mt-cyb), found in Ranodon sibiricus (Siberian salamander).